Consider the following 1252-residue polypeptide: Calmodulin-regulated spectrin-associated protein 3 (1252 aa).

9 disordered regions span residues 183-205 (KTEQ…SPAQ), 331-385 (HAVS…SMSH), 429-457 (SVSS…ESGD), 479-604 (GAAD…MSEL), 638-697 (FLQV…LGDY), 712-935 (QRDM…EAAR), 962-981 (TTRA…GDFT), 996-1030 (DLDK…DDSA), and 1063-1114 (PNNL…TGPR). At Thr184 the chain carries Phosphothreonine. Position 193 is a phosphoserine (Ser193). The 110-residue stretch at 203–312 (PAQPSIRYRK…LVVLLAEMYM (110 aa)) folds into the Calponin-homology (CH) domain. Residues Ser334, Ser347, Ser351, Ser368, Ser373, and Ser382 each carry the phosphoserine modification. Positions 335-353 (PRNTETVPSQNNSGSSSPV) are enriched in polar residues. The span at 359–373 (PLLSPGGPQSPLRGS) shows a compositional bias: low complexity. 3 stretches are compositionally biased toward polar residues: residues 374–383 (TGSLKSSPSM), 441–450 (VSTSSRNSAQ), and 525–534 (ENPSKSSPCS). Phosphoserine occurs at positions 548, 555, and 561. A compositionally biased stretch (basic and acidic residues) spans 569–580 (AERKKQLVKAEA). A coiled-coil region spans residues 595 to 629 (EALSSEMSELGARLEEKRRAIEAQKRRIEAIFAKH). At Ser683 the chain carries Phosphoserine. Residues 696–727 (DYNRAVSKLSAALSSLQRDMQRLTDQQQRLLA) are a coiled coil. The segment covering 729–739 (PEAPGPAPPPA) has biased composition (pro residues). Over residues 740-768 (AWVIPGPATGPKAASPSPARRAPAARRSP) the composition is skewed to low complexity. Ser767 carries the phosphoserine modification. Thr797 bears the Phosphothreonine mark. Residues Ser812 and Ser881 each carry the phosphoserine modification. Over residues 812-825 (SPSQVPVQTRSSIL) the composition is skewed to polar residues. A compositionally biased stretch (basic and acidic residues) spans 887 to 934 (YKDEDKPEDEMAQKRASLLERQQRRVEEARRRKQWQEAEKEQKREEAA). Residues 896–943 (EMAQKRASLLERQQRRVEEARRRKQWQEAEKEQKREEAARLAQEAPGL) adopt a coiled-coil conformation. The residue at position 1077 (Ser1077) is a Phosphoserine. The region spanning 1112–1246 (GPRLYKEPSA…QSKKPTTPKK (135 aa)) is the CKK domain.

It belongs to the CAMSAP1 family. In terms of assembly, interacts with PLEKHA7. Interacts with CAMSAP2. Interacts with KATNA1 and KATNB1; leading to regulate the length of CAMSAP3-decorated microtubule stretches. Interacts with AKAP9; regulating Golgi assembly in epithelial cells. Interacts with MACF1. Interacts with isoform C of CDH23; leading to inhibit CAMSAP3 ability to induce microtubule bundle formation. Interacts with AKNA. In terms of tissue distribution, expressed at the apical surface of respiratory epithelia, as well as in the acini of submucosal glands (at protein level). In cochlea, restricted to the organ of Corti and increases during development (at protein level). Highly expressed in both sensory hair cells and supporting cells.

It localises to the cytoplasm. It is found in the cytoskeleton. Its subcellular location is the cell junction. The protein localises to the adherens junction. The protein resides in the cilium axoneme. It localises to the cilium basal body. Its function is as follows. Key microtubule-organizing protein that specifically binds the minus-end of non-centrosomal microtubules and regulates their dynamics and organization. Specifically recognizes growing microtubule minus-ends and autonomously decorates and stabilizes microtubule lattice formed by microtubule minus-end polymerization. Acts on free microtubule minus-ends that are not capped by microtubule-nucleating proteins or other factors and protects microtubule minus-ends from depolymerization. In addition, it also reduces the velocity of microtubule polymerization. Required for the biogenesis and the maintenance of zonula adherens by anchoring the minus-end of microtubules to zonula adherens and by recruiting the kinesin KIFC3 to those junctional sites. Required for orienting the apical-to-basal polarity of microtubules in epithelial cells: acts by tethering non-centrosomal microtubules to the apical cortex, leading to their longitudinal orientation. Plays a key role in early embryos, which lack centrosomes: accumulates at the microtubule bridges that connect pairs of cells and enables the formation of a non-centrosomal microtubule-organizing center that directs intracellular transport in the early embryo. Couples non-centrosomal microtubules with actin: interaction with MACF1 at the minus ends of non-centrosomal microtubules, tethers the microtubules to actin filaments, regulating focal adhesion size and cell migration. Plays a key role in the generation of non-centrosomal microtubules by accumulating in the pericentrosomal region and cooperating with KATNA1 to release non-centrosomal microtubules from the centrosome. Through the microtubule cytoskeleton, also regulates the organization of cellular organelles including the Golgi and the early endosomes. Through interaction with AKAP9, involved in translocation of Golgi vesicles in epithelial cells, where microtubules are mainly non-centrosomal. Plays an important role in motile cilia function by facilitatating proper orientation of basal bodies and formation of central microtubule pairs in motile cilia. The sequence is that of Calmodulin-regulated spectrin-associated protein 3 from Mus musculus (Mouse).